The sequence spans 1405 residues: MNQEVMNLFNQQAQPQSFDQIKISISSPEKILSWSYGEIKKPETINYRTFKPERDGLFCARIFGPIKDYECLCGKYKRMKYKGVICEKCGVEVTLARVRRDRMGHIELAAPVAHIWFLKSLPSRIGLLLDMALKDLERILYFESYVVIEPGLTPLKERQLLSEEEYLRAQEEYGEDSFTAMIGAEAIRRILMELDLEGIATSLKEEIATTTSELKPKKLMKRLKIIEAFQLSGNKPEWMILTVVPVIPPDLRPLVPLDGGRFATSDLNDLYRRVINRNNRLKRLIELRAPDIIIRNEKRMLQEAVDALFDNGRRGRVITGANKRPLKSLADMLKGKQGRFRQNLLGKRVDYSGRSVIVVGPELKLHQCGLPKKMALELFKPFIYARLDAKGFSATVKQAKKLVEKEKPEVWDILDEVIREHPVMLNRAPTLHRLGIQAFEPKLIEGKAIQLHPLVCAAFNADFDGDQMAVHVPLSLEAQLEARVLMMSTNNILHPANGQPIIVPSQDIVLGLYYLSIVADGSVGEHKADDKNNPMQGVFGDIGQLEHALAAKSVSLHSKIKWRWRGLGPDGEPVSRIYDTTPGRVILSGVLPMHPKVPFDVVNKLMTKKEISAMIDTVYRHCGQKESVIFCDRIMALGFSHAFKAGISFGKDDMVVPENKWSIVEDTRTLVKDYEQQYNDGLITQGEKYNKVVDAWAKCSDKLAAEMMGRISAVQKDENGADKQVNSIYMMSHSGARGSPAQMKQLAAMRGLMAKPSGEIIETPIISNFKEGLDVLEYFNSTHGARKGLADTALKTANSGYLTRRLVDVAQDAVIREVDCGTTNGIKMRAIIDAGQVVAPLSIRILGRATAEDLVAQDGTVIVKTNETIEERHLPAINAAGIQEVKIRSVLVCQTKSGVCATCYGRDLARGTPVNMGEAVGVIAAQSIGEPGTQLTMRTFHIGGAAQIADSSFVESSFEGTIKIRNRSLAKNSDGDLIATGRSVAVVIVGPDGTERAVHRLQYGARVRVDEGDTIKRGQRIAEWDPYTRPIVAEVDGIVGYEDLYDGQSITETTDESTGIAKRVVIDWRGSSRTSDLKPAMLVLDQDGKPVKLARGSDARYYLPVDAIIGLDPGAKVRAGDVLARVSTDSAKTRDITGGLPRVAELFEARRPKDAAIIAEKSGSIAFGRDYKNKRRLTLTPHDGSDAVEYLIPKGKHIHLQDGDVVELGDYIVDGNPAPHDILAIKGVEELAAYLVNEIQEVYRLQGVSINDKHIEVIVRQMLQKVEITDGGDSDILTGDQIDRTELADFNEKLLAEGKKPIQGVPVLLGITKASLQTKSFISAASFQETTRVLTEAAVNGKVDTLDGLKENVIVGSLIPAGTGSLAADIRSIARRRDNLILQQRSAENAANAAELSELPPAAAE.

The Zn(2+) site is built by Cys-71, Cys-73, Cys-86, and Cys-89. Mg(2+)-binding residues include Asp-462, Asp-464, and Asp-466. Zn(2+)-binding residues include Cys-820, Cys-893, Cys-900, and Cys-903.

The protein belongs to the RNA polymerase beta' chain family. As to quaternary structure, the RNAP catalytic core consists of 2 alpha, 1 beta, 1 beta' and 1 omega subunit. When a sigma factor is associated with the core the holoenzyme is formed, which can initiate transcription. It depends on Mg(2+) as a cofactor. The cofactor is Zn(2+).

The catalysed reaction is RNA(n) + a ribonucleoside 5'-triphosphate = RNA(n+1) + diphosphate. Its function is as follows. DNA-dependent RNA polymerase catalyzes the transcription of DNA into RNA using the four ribonucleoside triphosphates as substrates. This is DNA-directed RNA polymerase subunit beta' from Methylorubrum extorquens (strain CM4 / NCIMB 13688) (Methylobacterium extorquens).